Reading from the N-terminus, the 550-residue chain is Hydroxylamine reductase (550 aa).

Positions 3, 6, 18, and 25 each coordinate [2Fe-2S] cluster. Hybrid [4Fe-2O-2S] cluster-binding residues include histidine 249, glutamate 273, cysteine 317, cysteine 405, cysteine 433, cysteine 458, glutamate 492, and lysine 494. Cysteine persulfide is present on cysteine 405.

The protein belongs to the HCP family. [2Fe-2S] cluster serves as cofactor. Requires hybrid [4Fe-2O-2S] cluster as cofactor.

It is found in the cytoplasm. The enzyme catalyses A + NH4(+) + H2O = hydroxylamine + AH2 + H(+). In terms of biological role, catalyzes the reduction of hydroxylamine to form NH(3) and H(2)O. In Escherichia coli O139:H28 (strain E24377A / ETEC), this protein is Hydroxylamine reductase.